Consider the following 409-residue polypeptide: Pentatricopeptide repeat-containing protein At1g31790 (409 aa).

PPR repeat units lie at residues 87–121 (NEDIYSCLAKESARENDQRGAHELQVHIMKSSIRP), 122–152 (TITFINRLLLMHVSCGRLDITRQMFDRMPHR), 153–187 (DFHSWAIVFLGCIEMGDYEDAAFLFVSMLKHSQKG), 192–226 (PSWILGCVLKACAMIRDFELGKQVHALCHKLGFID), 229–259 (DSYLSGSLIRFYGEFRCLEDANLVLHQLSNA), 260–294 (NTVAWAAKVTNDYREGEFQEVIRDFIEMGNHGIKK), 295–330 (NVSVFSNVLKACSWVSDGGRSGQQVHANAIKLGFES), 331–361 (DCLIRCRLIEMYGKYGKVKDAEKVFKSSKDE), and 363–397 (SVSCWNAMVASYMQNGIYIEAIKLLYQMKATGIKA).

The protein belongs to the PPR family. PCMP-A subfamily.

This chain is Pentatricopeptide repeat-containing protein At1g31790 (PCMP-A1), found in Arabidopsis thaliana (Mouse-ear cress).